Reading from the N-terminus, the 597-residue chain is MRLSVFIIPLVESRQASGIINKQSTSLLIRFSLYLEASISTKSFFSKSQRISQTQSPICLSANYYQPDNLDMEATQKHMIQEGSSMFYHQPSSVKQMDLSVQTFDSYCTLESSSGTKSHPCLNNKNNSSSTTSFSSNESPISQANNNNLSRFNNHSPEENNNSPLSGSSATNTNETELSLMLKDLETAMMEPDVDNSYNNQGGFGQQHGVVSSAMYRSMEMISRGDLKGVLYECAKAVENYDLEMTDWLISQLQQMVSVSGEPVQRLGAYMLEGLVARLASSGSSIYKALRCKDPTGPELLTYMHILYEACPYFKFGYESANGAIAEAVKNESFVHIIDFQISQGGQWVSLIRALGARPGGPPNVRITGIDDPRSSFARQGGLELVGQRLGKLAEMCGVPFEFHGAALCCTEVEIEKLGVRNGEALAVNFPLVLHHMPDESVTVENHRDRLLRLVKHLSPNVVTLVEQEANTNTAPFLPRFVETMNHYLAVFESIDVKLARDHKERINVEQHCLAREVVNLIACEGVEREERHEPLGKWRSRFHMAGFKPYPLSSYVNATIKGLLESYSEKYTLEERDGALYLGWKNQPLITSCAWR.

The tract at residues 111-172 is disordered; it reads ESSSGTKSHP…SPLSGSSATN (62 aa). A compositionally biased stretch (low complexity) spans 123 to 169; that stretch reads NNKNNSSSTTSFSSNESPISQANNNNLSRFNNHSPEENNNSPLSGSS. The 380-residue stretch at 218 to 597 folds into the GRAS domain; it reads SMEMISRGDL…QPLITSCAWR (380 aa). The interval 225-285 is leucine repeat I (LRI); it reads GDLKGVLYEC…VARLASSGSS (61 aa). The tract at residues 304-369 is VHIID; it reads MHILYEACPY…GGPPNVRITG (66 aa). Residues 335 to 339 carry the VHIID motif; it reads VHIID. The leucine repeat II (LRII) stretch occupies residues 385-417; that stretch reads LVGQRLGKLAEMCGVPFEFHGAALCCTEVEIEK. Residues 426 to 520 are PFYRE; sequence LAVNFPLVLH…QHCLAREVVN (95 aa). Residues 523–597 are SAW; it reads ACEGVEREER…QPLITSCAWR (75 aa).

It belongs to the GRAS family. In terms of tissue distribution, expressed in seedlings, roots, shoots, leaves, flowers and siliques.

The protein resides in the nucleus. In terms of biological role, probable transcription factor involved in plant development. The chain is Scarecrow-like protein 5 (SCL5) from Arabidopsis thaliana (Mouse-ear cress).